We begin with the raw amino-acid sequence, 346 residues long: Anthranilate phosphoribosyltransferase (346 aa).

Residues glycine 88, 91–92 (GD), threonine 96, 98–101 (NIST), 116–124 (KHGNRAVSS), and alanine 128 each bind 5-phospho-alpha-D-ribose 1-diphosphate. Glycine 88 contacts anthranilate. Serine 100 serves as a coordination point for Mg(2+). Position 119 (asparagine 119) interacts with anthranilate. Arginine 174 is a binding site for anthranilate. Residues aspartate 233 and glutamate 234 each contribute to the Mg(2+) site.

Belongs to the anthranilate phosphoribosyltransferase family. Homodimer. Requires Mg(2+) as cofactor.

It carries out the reaction N-(5-phospho-beta-D-ribosyl)anthranilate + diphosphate = 5-phospho-alpha-D-ribose 1-diphosphate + anthranilate. It functions in the pathway amino-acid biosynthesis; L-tryptophan biosynthesis; L-tryptophan from chorismate: step 2/5. Catalyzes the transfer of the phosphoribosyl group of 5-phosphorylribose-1-pyrophosphate (PRPP) to anthranilate to yield N-(5'-phosphoribosyl)-anthranilate (PRA). The polypeptide is Anthranilate phosphoribosyltransferase (Paramagnetospirillum magneticum (strain ATCC 700264 / AMB-1) (Magnetospirillum magneticum)).